We begin with the raw amino-acid sequence, 165 residues long: Methylated-DNA--protein-cysteine methyltransferase (165 aa).

Cys-126 serves as the catalytic Nucleophile; methyl group acceptor.

It belongs to the MGMT family.

It is found in the cytoplasm. It catalyses the reaction a 6-O-methyl-2'-deoxyguanosine in DNA + L-cysteinyl-[protein] = S-methyl-L-cysteinyl-[protein] + a 2'-deoxyguanosine in DNA. The enzyme catalyses a 4-O-methyl-thymidine in DNA + L-cysteinyl-[protein] = a thymidine in DNA + S-methyl-L-cysteinyl-[protein]. Involved in the cellular defense against the biological effects of O6-methylguanine (O6-MeG) and O4-methylthymine (O4-MeT) in DNA. Repairs the methylated nucleobase in DNA by stoichiometrically transferring the methyl group to a cysteine residue in the enzyme. This is a suicide reaction: the enzyme is irreversibly inactivated. In Mycobacterium leprae (strain TN), this protein is Methylated-DNA--protein-cysteine methyltransferase.